A 380-amino-acid polypeptide reads, in one-letter code: Succinyl-diaminopimelate desuccinylase (380 aa).

His68 serves as a coordination point for Zn(2+). Asp70 is an active-site residue. Asp101 contributes to the Zn(2+) binding site. Residue Glu135 is the Proton acceptor of the active site. Positions 136, 164, and 350 each coordinate Zn(2+).

It belongs to the peptidase M20A family. DapE subfamily. Homodimer. The cofactor is Zn(2+). Co(2+) is required as a cofactor.

It catalyses the reaction N-succinyl-(2S,6S)-2,6-diaminopimelate + H2O = (2S,6S)-2,6-diaminopimelate + succinate. Its pathway is amino-acid biosynthesis; L-lysine biosynthesis via DAP pathway; LL-2,6-diaminopimelate from (S)-tetrahydrodipicolinate (succinylase route): step 3/3. Catalyzes the hydrolysis of N-succinyl-L,L-diaminopimelic acid (SDAP), forming succinate and LL-2,6-diaminopimelate (DAP), an intermediate involved in the bacterial biosynthesis of lysine and meso-diaminopimelic acid, an essential component of bacterial cell walls. In Tolumonas auensis (strain DSM 9187 / NBRC 110442 / TA 4), this protein is Succinyl-diaminopimelate desuccinylase.